Here is a 356-residue protein sequence, read N- to C-terminus: S-adenosylmethionine:tRNA ribosyltransferase-isomerase (356 aa).

The protein belongs to the QueA family. As to quaternary structure, monomer.

Its subcellular location is the cytoplasm. The catalysed reaction is 7-aminomethyl-7-carbaguanosine(34) in tRNA + S-adenosyl-L-methionine = epoxyqueuosine(34) in tRNA + adenine + L-methionine + 2 H(+). The protein operates within tRNA modification; tRNA-queuosine biosynthesis. Functionally, transfers and isomerizes the ribose moiety from AdoMet to the 7-aminomethyl group of 7-deazaguanine (preQ1-tRNA) to give epoxyqueuosine (oQ-tRNA). In Salmonella arizonae (strain ATCC BAA-731 / CDC346-86 / RSK2980), this protein is S-adenosylmethionine:tRNA ribosyltransferase-isomerase.